A 507-amino-acid polypeptide reads, in one-letter code: Monocarboxylate transporter 9 (507 aa).

The Extracellular portion of the chain corresponds to 1 to 12 (MVYRKPPDGGWG). A helical transmembrane segment spans residues 13 to 33 (WVIVIVSFFTQFLCYGSPLAV). Topologically, residues 34 to 52 (GVLYLEWLDAFGEGKGKTA) are cytoplasmic. A helical transmembrane segment spans residues 53–73 (WVGSLANGIGLLASPVCSICV). Residues 74–79 (SSFGAR) lie on the Extracellular side of the membrane. The chain crosses the membrane as a helical span at residues 80 to 100 (PVAIFSGFMVAGGLMMSSFAP). The Cytoplasmic segment spans residues 101–102 (NI). Residues 103-123 (YFLYLSYGIVVGLGCGLLYNA) traverse the membrane as a helical segment. The Extracellular portion of the chain corresponds to 124–136 (TVTITCQYFDKRR). A helical transmembrane segment spans residues 137 to 157 (GLALGLISTGSSVGLFIYAAL). Residues 158-163 (QRELIE) lie on the Cytoplasmic side of the membrane. The helical transmembrane segment at 164-184 (LYGLDGCLLIVGALSLNILAC) threads the bilayer. Residues 185–302 (GSLMRPLESS…EETVVLFKNR (118 aa)) lie on the Extracellular side of the membrane. Residues 303 to 323 (VFSALFFAILLFDIGGFPPSL) form a helical membrane-spanning segment. Residues 324–340 (LMEDIARSANINEEDYH) are Cytoplasmic-facing. Residues 341 to 361 (MPLVSIIGIMTAIGKLILGIL) form a helical membrane-spanning segment. Residues 362–369 (ADFKWVNT) lie on the Extracellular side of the membrane. A helical membrane pass occupies residues 370–390 (LYLYVLTLLMMGAALLAIPFA). The Cytoplasmic portion of the chain corresponds to 391–395 (RSYFT). A helical transmembrane segment spans residues 396-416 (LAVLSGILGFLTGNWSIFPYV). Residues 417-430 (TTKTVGIEKLTHAY) lie on the Extracellular side of the membrane. Residues 431–451 (GILMFFAGLGNSLGPPIVGWF) form a helical membrane-spanning segment. Over 452–460 (YDWTQEYDT) the chain is Cytoplasmic. A helical transmembrane segment spans residues 461–481 (AFYFSGFCVLLGGFLLLLAAL). At 482–507 (PCWNACTDRSSKLPPNTYSYKVASSA) the chain is on the extracellular side.

This sequence belongs to the major facilitator superfamily. Monocarboxylate porter (TC 2.A.1.13) family.

The protein localises to the cell membrane. The enzyme catalyses creatine(in) = creatine(out). It carries out the reaction (R)-carnitine(in) = (R)-carnitine(out). In terms of biological role, extracellular pH-and Na(+)-sensitive low-affinity creatine transporter. Also functions as a pH-independent carnitine efflux transporter. The polypeptide is Monocarboxylate transporter 9 (SLC16A9) (Gallus gallus (Chicken)).